We begin with the raw amino-acid sequence, 194 residues long: MIGLRPAFSTMLFLLLLTGGVYPLLTTALGQWWFPWQANGSLIHKDNVIRGSALIGQSFTAAGYFHGRPSATADTPYNPLASGGSNLAASNPELDAQIQARVAALRAANPQASSAVPVELATASASGLDNNLTPGAAAWQIPRVAAARQLPVEQVAQLVAEYTHRPLASFLGQPVVNIVKLNLALDALQGHRAK.

A helical membrane pass occupies residues 12–34; sequence LFLLLLTGGVYPLLTTALGQWWF.

This sequence belongs to the KdpC family. As to quaternary structure, the system is composed of three essential subunits: KdpA, KdpB and KdpC.

Its subcellular location is the cell inner membrane. Functionally, part of the high-affinity ATP-driven potassium transport (or Kdp) system, which catalyzes the hydrolysis of ATP coupled with the electrogenic transport of potassium into the cytoplasm. This subunit acts as a catalytic chaperone that increases the ATP-binding affinity of the ATP-hydrolyzing subunit KdpB by the formation of a transient KdpB/KdpC/ATP ternary complex. The chain is Potassium-transporting ATPase KdpC subunit from Salmonella schwarzengrund (strain CVM19633).